We begin with the raw amino-acid sequence, 148 residues long: Single-stranded DNA-binding protein 2 (148 aa).

Residues 6-108 (MNHITVSGLV…IEAESFGHDL (103 aa)) enclose the SSB domain.

As to quaternary structure, homotetramer.

The chain is Single-stranded DNA-binding protein 2 (ssb2) from Tropheryma whipplei (strain TW08/27) (Whipple's bacillus).